Consider the following 702-residue polypeptide: MASSRVPQQLFLQGVAAVYLFAFASLYTQIPGLYGPEGILPARRTLRPQGKGLWQQLWETPTLLWEAPRLGLDTAQGLDLLTLLGTVLALGALLLNSLRHPFVYLLLWVAYRSAYQVGQVFLYFQWDSLLLETGFLAILVAPLRGPSKHKILQGRLAGALPHEDLPFWLVRWLLFRLMFASGVVKLTSRCPTWWGLTALTYHYETQCLPTPAAWFAHHLPVWLHKLSVVATFLIEIAVPPLFFAPIRRLRLTAFYAQALLQVLIIITGNYNFFNLLTLVLTTALLDDRHLSAEPGLRCHKKMPTSWPKALLTALSLLLELTVYGLLAYGTVYYFGLEVDWQQHIILSKTTFTFHQFSQWLKTVTLPTVWLGTASLAWELLVVLWRWIQVQGWSRKFSAGIQLSVLGTATVALFLISLVPYSYVEPGTHGRLWTGAHRLFGSVEHLQLANSYGLFRRMTGVGGRPEVVLEGSYDGQHWTEIEFMYKPGNVSRPPPFLTPHQPRLDWQMWFAALGPHTHSPWFTGLVLRLLQGKEPVIRLVQSHVANYPFHERPPTYLRAQRYKYWFSKPGDQSRWWHRQWVEEFFPSVSLGDPTLETLLQQFGLKDKSPPRARSPSNGLAQTLNWVRTQLSPLEPPILLWGLFGAVVAIRVVQTLLAPRPLQSSKQTREEKRKQTSKKDSRAASEQAAANSNSRDSWAPRRKK.

Transmembrane regions (helical) follow at residues 10–30 (LFLQ…YTQI), 75–95 (AQGL…ALLL), 164–184 (DLPF…SGVV), 226–246 (LSVV…FAPI), 259–279 (LLQV…LTLV), 316–336 (LLLE…YFGL), 363–383 (VTLP…LVVL), and 398–418 (AGIQ…ISLV). The N-linked (GlcNAc...) asparagine glycan is linked to Asn488. The chain crosses the membrane as a helical span at residues 636-656 (ILLWGLFGAVVAIRVVQTLLA). The interval 660–702 (LQSSKQTREEKRKQTSKKDSRAASEQAAANSNSRDSWAPRRKK) is disordered. Over residues 665–681 (QTREEKRKQTSKKDSRA) the composition is skewed to basic and acidic residues. The segment covering 682 to 693 (ASEQAAANSNSR) has biased composition (low complexity).

The protein belongs to the lipase maturation factor family.

It is found in the endoplasmic reticulum membrane. Functionally, involved in the maturation of specific proteins in the endoplasmic reticulum. May be required for maturation and transport of active lipoprotein lipase (LPL) through the secretory pathway. The sequence is that of Lipase maturation factor 2 (Lmf2) from Mus musculus (Mouse).